The following is a 271-amino-acid chain: MLPTVFIVSDGTGITAETFAHSILSQFDQKFRLVRVPFVDSLDKAYATVEKINEAAVHDGRRAIVFTTLVDSESNDIVKRSNALVLDMFQRFVEPLEQELELKSSHAMGRGHQNADTEEYKTRIEAINFSLAHDDGQSNRNLSEADVILVGVSRSGKTPTSLYLAMQYGVKAANYPLIPEDFERGKLPSALAPYSEKLFGLSIDPQRLSEIRNERRPGSKYAAPENCRYEINEAEAMMRREGIKWLSSTHKSIEEIATTILQEIRLDRQSY.

151–158 (GVSRSGKT) is an ADP binding site.

Belongs to the pyruvate, phosphate/water dikinase regulatory protein family. PSRP subfamily.

It catalyses the reaction [pyruvate, water dikinase] + ADP = [pyruvate, water dikinase]-phosphate + AMP + H(+). It carries out the reaction [pyruvate, water dikinase]-phosphate + phosphate + H(+) = [pyruvate, water dikinase] + diphosphate. Functionally, bifunctional serine/threonine kinase and phosphorylase involved in the regulation of the phosphoenolpyruvate synthase (PEPS) by catalyzing its phosphorylation/dephosphorylation. In Burkholderia orbicola (strain MC0-3), this protein is Putative phosphoenolpyruvate synthase regulatory protein.